Reading from the N-terminus, the 337-residue chain is Protein RecA (337 aa).

Position 66–73 (66–73) interacts with ATP; it reads GPESSGKT.

Belongs to the RecA family.

It is found in the cytoplasm. Can catalyze the hydrolysis of ATP in the presence of single-stranded DNA, the ATP-dependent uptake of single-stranded DNA by duplex DNA, and the ATP-dependent hybridization of homologous single-stranded DNAs. It interacts with LexA causing its activation and leading to its autocatalytic cleavage. The sequence is that of Protein RecA from Mesomycoplasma hyopneumoniae (strain 232) (Mycoplasma hyopneumoniae).